The following is a 510-amino-acid chain: Catalase (510 aa).

The N-terminal stretch at 1 to 26 (MPLLNWSRHMVCLTAAGLITVPTVYA) is a signal peptide. Catalysis depends on residues His78 and Asn150. Tyr358 provides a ligand contact to heme. Polar residues predominate over residues 386 to 400 (NQDGALNTGHTTSGV). The segment at 386-412 (NQDGALNTGHTTSGVNYEPSRLEPRPA) is disordered.

The protein belongs to the catalase family. It depends on heme as a cofactor.

It is found in the periplasm. It catalyses the reaction 2 H2O2 = O2 + 2 H2O. Its function is as follows. Decomposes hydrogen peroxide into water and oxygen; serves to protect cells from the toxic effects of hydrogen peroxide. In Pseudomonas syringae pv. syringae, this protein is Catalase (katB).